A 337-amino-acid polypeptide reads, in one-letter code: Serpentine receptor class delta-18 (337 aa).

The next 6 helical transmembrane spans lie at Ile2 to Leu22, Val90 to Phe110, Leu130 to Ala150, Ile187 to Leu207, Ala236 to Leu256, and Ser270 to Val290.

Belongs to the nematode receptor-like protein srd family.

The protein resides in the membrane. This Caenorhabditis elegans protein is Serpentine receptor class delta-18 (srd-18).